Consider the following 123-residue polypeptide: WAP four-disulfide core domain protein 5 (123 aa).

Positions 1-24 (MRFWSLFLLVVLLAVGGQLPAASG) are cleaved as a signal peptide. 2 consecutive WAP domains span residues 27-74 (KGER…VPRI) and 75-121 (LVKR…RDPA). Intrachain disulfides connect Cys34–Cys62, Cys41–Cys66, Cys49–Cys61, Cys55–Cys70, Cys81–Cys109, Cys88–Cys113, Cys96–Cys108, and Cys102–Cys117.

Its subcellular location is the secreted. Its function is as follows. Putative acid-stable proteinase inhibitor. The polypeptide is WAP four-disulfide core domain protein 5 (WFDC5) (Lemur catta (Ring-tailed lemur)).